The following is a 457-amino-acid chain: Peptidyl-prolyl cis-trans isomerase FKBP5 (457 aa).

The residue at position 1 (Met1) is an N-acetylmethionine. Positions 1–11 (MTTDEGAKNNE) are enriched in basic and acidic residues. The interval 1 to 24 (MTTDEGAKNNEESPTATVAEQGED) is disordered. Ser13 carries the phosphoserine modification. Lys28 is modified (N6-acetyllysine). Residues 42 to 130 (NGEETPMIGD…KIPSNATLFF (89 aa)) enclose the PPIase FKBP-type 1 domain. Lys155 is subject to N6-acetyllysine. The PPIase FKBP-type 2 domain occupies 157 to 243 (EGYSNPNEGA…GIEPNAELIY (87 aa)). TPR repeat units lie at residues 268 to 301 (AAIVKEKGTVYFKGGKYMQAVIQYGKIVSWLEME), 317 to 350 (LAAFLNLAMCYLKLREYTKAVECCDKALGLDSAN), and 351 to 384 (EKGLYRRGEAQLLMNEFESAKGDFEKVLEVNPQN). Residues 420–457 (DAKEEANKAMGKKTSEGVTNEKGTDSQAMEEEKPEGHV) are disordered. The residue at position 445 (Ser445) is a Phosphoserine.

Part of a heteromultimeric cytoplasmic complex with HSP90AA1, HSPA1A/HSPA1B and steroid receptors. Upon ligand binding dissociates from the complex and FKBP4 takes its place. Interacts with functionally mature heterooligomeric progesterone receptor complexes along with HSP90 and TEBP. Interacts with NR3C1. Interacts with Akt/AKT1 and PHLPP1; enhancing dephosphorylation and subsequent activation of Akt/AKT1. Interacts with IFI44L; this interaction modulates the kinase activity of IKBKB and IKBKE. Interacts with IKBKB and IKBKE. Acetylation impairs ability to promote interaction between Akt/AKT1 and PHLPP1. Deacetylation by SIRT7 promotes interaction between Akt/AKT1 and PHLPP1, leading to suppress Akt/AKT1 activation. Post-translationally, ubiquitinated, leading to degradation in a proteasome-dependent manner. Deubiquitinated by USP49, leading to stabilization. In terms of tissue distribution, widely expressed, enriched in testis compared to other tissues.

Its subcellular location is the cytoplasm. The protein localises to the nucleus. The catalysed reaction is [protein]-peptidylproline (omega=180) = [protein]-peptidylproline (omega=0). Its activity is regulated as follows. Inhibited by both FK506 and rapamycin. Immunophilin protein with PPIase and co-chaperone activities. Component of unligated steroid receptors heterocomplexes through interaction with heat-shock protein 90 (HSP90). Plays a role in the intracellular trafficking of heterooligomeric forms of steroid hormone receptors maintaining the complex into the cytoplasm when unliganded. Acts as a regulator of Akt/AKT1 activity by promoting the interaction between Akt/AKT1 and PHLPP1, thereby enhancing dephosphorylation and subsequent activation of Akt/AKT1. Interacts with IKBKE and IKBKB which facilitates IKK complex assembly leading to increased IKBKE and IKBKB kinase activity, NF-kappa-B activation, and IFN production. This Homo sapiens (Human) protein is Peptidyl-prolyl cis-trans isomerase FKBP5 (FKBP5).